The following is a 369-amino-acid chain: Glycine oxidase (369 aa).

FAD-binding positions include 14-15, 34-35, 42-43, 47-49, and V174; these read II, ES, AT, and AGM. Residues R302 and R329 each coordinate substrate. 327 to 333 contributes to the FAD binding site; sequence HFRNGIL.

Belongs to the DAO family. ThiO subfamily. In terms of assembly, homotetramer. It depends on FAD as a cofactor.

The catalysed reaction is glycine + O2 + H2O = glyoxylate + H2O2 + NH4(+). The enzyme catalyses glyphosate + O2 + H2O = aminomethylphosphonate + glyoxylate + H2O2 + H(+). It catalyses the reaction N-ethylglycine + O2 + H2O = ethylamine + glyoxylate + H2O2. It carries out the reaction sarcosine + O2 + H2O = methylamine + glyoxylate + H2O2. The catalysed reaction is D-alanine + O2 + H2O = pyruvate + H2O2 + NH4(+). It functions in the pathway cofactor biosynthesis; thiamine diphosphate biosynthesis. Catalyzes the FAD-dependent oxidative deamination of glycine, leading to glyoxylate, ammonia and hydrogen peroxide. Is also able to act on various amines and D-amino acids to yield the corresponding alpha-keto acids, ammonia/amine, and hydrogen peroxide. Can also oxidize the herbicide glyphosate (N-phosphonomethylglycine), and thus may be involved in the degradation pathway that allows B.licheniformis J33-8 to grow with glyphosate as the sole source of carbon. Is essential for thiamine biosynthesis since the oxidation of glycine catalyzed by ThiO generates the glycine imine intermediate (dehydroglycine) required for the biosynthesis of the thiazole ring of thiamine pyrophosphate. This chain is Glycine oxidase, found in Bacillus licheniformis.